The sequence spans 429 residues: 3-phosphoshikimate 1-carboxyvinyltransferase (429 aa).

Residues lysine 23, serine 24, and arginine 28 each coordinate 3-phosphoshikimate. Lysine 23 contacts phosphoenolpyruvate. The phosphoenolpyruvate site is built by glycine 97 and arginine 125. Residues serine 170, serine 171, glutamine 172, serine 198, aspartate 314, asparagine 338, and lysine 342 each coordinate 3-phosphoshikimate. Glutamine 172 contributes to the phosphoenolpyruvate binding site. Aspartate 314 functions as the Proton acceptor in the catalytic mechanism. Positions 346, 388, and 413 each coordinate phosphoenolpyruvate.

The protein belongs to the EPSP synthase family. As to quaternary structure, monomer.

The protein localises to the cytoplasm. The catalysed reaction is 3-phosphoshikimate + phosphoenolpyruvate = 5-O-(1-carboxyvinyl)-3-phosphoshikimate + phosphate. It participates in metabolic intermediate biosynthesis; chorismate biosynthesis; chorismate from D-erythrose 4-phosphate and phosphoenolpyruvate: step 6/7. In terms of biological role, catalyzes the transfer of the enolpyruvyl moiety of phosphoenolpyruvate (PEP) to the 5-hydroxyl of shikimate-3-phosphate (S3P) to produce enolpyruvyl shikimate-3-phosphate and inorganic phosphate. In Pectobacterium carotovorum subsp. carotovorum (strain PC1), this protein is 3-phosphoshikimate 1-carboxyvinyltransferase.